We begin with the raw amino-acid sequence, 542 residues long: E3 ubiquitin-protein ligase RNF217 (542 aa).

2 disordered regions span residues 1–140 (MGEE…TRVG) and 176–216 (APAS…TDSL). Low complexity predominate over residues 37–50 (SARAPPLRAASAEP). A compositionally biased stretch (acidic residues) spans 122–132 (DEQQEAPPGEE). The span at 185–196 (PASPPGAPPVLN) shows a compositional bias: pro residues. Over residues 197 to 213 (PPSTRSSFPSPRLSLPT) the composition is skewed to low complexity. The segment at 259–478 (MVLMCRVCLE…LSIFGCKYRY (220 aa)) is TRIAD supradomain. 10 residues coordinate Zn(2+): cysteine 263, cysteine 266, cysteine 283, cysteine 286, cysteine 383, cysteine 386, histidine 391, cysteine 396, cysteine 423, and cysteine 426. An RING-type 1 zinc finger spans residues 263–309 (CRVCLEDKPIKPLPCCKKAVCEECLKVYLSAQVQLGQVEIKCPITEC). The segment at 328 to 396 (IKYKYFLELG…HSPWHEGVNC (69 aa)) adopts an IBR-type zinc-finger fold. The RING-type 2; atypical zinc-finger motif lies at 423–452 (CPKCKIHIQRTEGCDHMTCSQCNTNFCYRC). Cysteine 436 is an active-site residue. The Zn(2+) site is built by cysteine 441, cysteine 444, cysteine 449, cysteine 452, histidine 465, and cysteine 474. A helical membrane pass occupies residues 503-523 (LIMVLGLALGAIAVVIGLFVF).

It belongs to the RBR family. RNF217 subfamily. As to quaternary structure, interacts with HAX1. In terms of tissue distribution, mainly expressed in testis and skeletal muscle.

It is found in the membrane. The protein localises to the cytoplasm. The catalysed reaction is [E2 ubiquitin-conjugating enzyme]-S-ubiquitinyl-L-cysteine + [acceptor protein]-L-lysine = [E2 ubiquitin-conjugating enzyme]-L-cysteine + [acceptor protein]-N(6)-ubiquitinyl-L-lysine.. Its pathway is protein modification; protein ubiquitination. Its function is as follows. E3 ubiquitin-protein ligase which accepts ubiquitin from E2 ubiquitin-conjugating enzymes in the form of a thioester and then directly transfers the ubiquitin to targeted substrates. Mediates the degradation of the iron exporter ferroportin/SLC40A1 and thus regulates iron homeostasis. The chain is E3 ubiquitin-protein ligase RNF217 (RNF217) from Homo sapiens (Human).